The chain runs to 225 residues: Small ribosomal subunit protein uS5 (225 aa).

The S5 DRBM domain maps to Leu-57 to Val-120.

This sequence belongs to the universal ribosomal protein uS5 family. As to quaternary structure, part of the 30S ribosomal subunit. Contacts protein S4.

In terms of biological role, with S4 and S12 plays an important role in translational accuracy. This Methanococcus maripaludis (strain DSM 14266 / JCM 13030 / NBRC 101832 / S2 / LL) protein is Small ribosomal subunit protein uS5.